We begin with the raw amino-acid sequence, 46 residues long: Large ribosomal subunit protein bL34 (46 aa).

Belongs to the bacterial ribosomal protein bL34 family.

The protein is Large ribosomal subunit protein bL34 (rpmH) of Mycobacterium avium.